The sequence spans 189 residues: Thermostable direct hemolysin 2 (189 aa).

The signal sequence occupies residues 1 to 24 (MKYRYFAKKSFLFISMLAAFKTFA). Cysteines 175 and 185 form a disulfide.

It belongs to the TDH hemolysin family. As to quaternary structure, homodimer.

Bacterial hemolysins are exotoxins that attack blood cell membranes and cause cell rupture by mechanisms not clearly defined. This chain is Thermostable direct hemolysin 2 (tdh2), found in Vibrio parahaemolyticus serotype O3:K6 (strain RIMD 2210633).